Here is a 395-residue protein sequence, read N- to C-terminus: Major outer membrane porin, serovar F (395 aa).

Positions 1–22 (MKKLLKSVLVFAALSSASSLQA) are cleaved as a signal peptide.

This sequence belongs to the chlamydial porin (CP) (TC 1.B.2) family. In terms of assembly, part of a disulfide cross-linked outer membrane complex (COMC) composed of the major outer membrane porin (MOMP), the small cysteine-rich protein (OmcA) and the large cysteine-rich periplasmic protein (OmcB).

It localises to the cell outer membrane. In elementary bodies (EBs, the infectious stage, which is able to survive outside the host cell) provides the structural integrity of the outer envelope through disulfide cross-links with the small cysteine-rich protein and the large cysteine-rich periplasmic protein. It has been described in publications as the Sarkosyl-insoluble COMC (Chlamydia outer membrane complex), and serves as the functional equivalent of peptidoglycan. Its function is as follows. Permits diffusion of specific solutes through the outer membrane. The polypeptide is Major outer membrane porin, serovar F (ompA) (Chlamydia trachomatis).